The chain runs to 353 residues: GDP-mannose transporter (353 aa).

Over 1–31 (MGLLLSYLFGYIFYSVNKKFHIMEKFGASNS) the chain is Cytoplasmic. A helical membrane pass occupies residues 32–52 (IVNNGPVSIFAYCASSILMTV). Topologically, residues 53-66 (TNKFVVGAYEFNLN) are lumenal. The helical transmembrane segment at 67-87 (FFLLAVQAAVCLVTIATLKGL) threads the bilayer. Topologically, residues 88–102 (GIITYRQFNKDEAKK) are cytoplasmic. The chain crosses the membrane as a helical span at residues 103-122 (WFPIAFLLVLMIYTSSKALQ). Over 123-125 (YLS) the chain is Lumenal. The chain crosses the membrane as a helical span at residues 126-148 (IPVYTIFKNLTIILIAYGEVIWF). The Cytoplasmic segment spans residues 149–154 (GGKVTT). A helical transmembrane segment spans residues 155-172 (MALGSFILMVLSSVIAYY). Over 173 to 187 (GDTAETGEKTAEMHL) the chain is Lumenal. The helical transmembrane segment at 188–208 (LYLGYAWMFTNCFSSAAFVLI) threads the bilayer. Residues 209-227 (MRKRIKLTNFKDFDTMYYN) are Cytoplasmic-facing. Residues 228 to 248 (NLLSLPLLLVFSFLFEDWSSV) traverse the membrane as a helical segment. Residues 249-262 (NLNKNFPPDNRNTT) lie on the Lumenal side of the membrane. A glycan (N-linked (GlcNAc...) asparagine) is linked at Asn-260. Residues 263 to 283 (IFVMILSGASSVGISYCSAWC) form a helical membrane-spanning segment. Over 284 to 290 (VRVTSST) the chain is Cytoplasmic. Residues 291 to 313 (TYSMVGALNKLPIALSGLVFFNA) traverse the membrane as a helical segment. The Lumenal segment spans residues 314–316 (AVN). A helical transmembrane segment spans residues 317 to 336 (FWSVSSIFVGFLAGVFYAVA). At 337–353 (KQKQQKENAQQLPVANK) the chain is on the cytoplasmic side.

Belongs to the TPT transporter family. SLC35D subfamily. Homooligomer.

The protein resides in the golgi apparatus membrane. It localises to the cytoplasmic vesicle membrane. Its subcellular location is the endoplasmic reticulum membrane. Involved in the import of GDP-mannose from the cytoplasm into the Golgi lumen. This is GDP-mannose transporter (VRG4) from Meyerozyma guilliermondii (strain ATCC 6260 / CBS 566 / DSM 6381 / JCM 1539 / NBRC 10279 / NRRL Y-324) (Yeast).